We begin with the raw amino-acid sequence, 518 residues long: GMP synthase [glutamine-hydrolyzing] (518 aa).

Residues 11–203 (KIIVLDFGSQ…AFDVCQARSN (193 aa)) form the Glutamine amidotransferase type-1 domain. Cys-88 serves as the catalytic Nucleophile. Active-site residues include His-177 and Glu-179. Residues 204–393 (WSMDDFIDMQ…LGMPHELVWR (190 aa)) enclose the GMPS ATP-PPase domain. Residue 231-237 (SGGVDSS) coordinates ATP.

In terms of assembly, homodimer.

It catalyses the reaction XMP + L-glutamine + ATP + H2O = GMP + L-glutamate + AMP + diphosphate + 2 H(+). The protein operates within purine metabolism; GMP biosynthesis; GMP from XMP (L-Gln route): step 1/1. In terms of biological role, catalyzes the synthesis of GMP from XMP. This chain is GMP synthase [glutamine-hydrolyzing], found in Ligilactobacillus salivarius (strain UCC118) (Lactobacillus salivarius).